Consider the following 316-residue polypeptide: Zinc finger protein 367 (316 aa).

The tract at residues 61–97 is disordered; it reads VTLGPGSGSGAASPTRTSSSPAEADPLSCPEHLKDGI. Low complexity predominate over residues 70–82; that stretch reads GAASPTRTSSSPA. 2 C2H2-type zinc fingers span residues 121 to 143 and 149 to 173; these read IRCNICNRVFPREKSLQAHKRTH and YLCDYPDCGKAFVQSGQLKTHQRLH. Residues 234–294 form a disordered region; the sequence is QTREQRSPVP…GGVVTARRRL (61 aa). Acidic residues predominate over residues 255 to 278; the sequence is EDQEQQDPLDFLPSDEGEEEEQEE. Positions 289–313 form a coiled coil; it reads TARRRLQEQRERLHGALALIELANN.

Belongs to the krueppel C2H2-type zinc-finger protein family.

The protein resides in the nucleus. Its function is as follows. Transcriptional activator. The protein is Zinc finger protein 367 (znf367) of Danio rerio (Zebrafish).